The sequence spans 454 residues: Arginine biosynthesis bifunctional protein ArgJ, mitochondrial (454 aa).

Positions 184, 213, 224, 311, 449, and 454 each coordinate substrate. The active-site Nucleophile is Thr-224.

This sequence belongs to the ArgJ family. In terms of assembly, heterodimer of an alpha and a beta chain. In terms of processing, the alpha and beta chains are autoproteolytically processed from a single precursor protein within the mitochondrion.

Its subcellular location is the mitochondrion matrix. It carries out the reaction N(2)-acetyl-L-ornithine + L-glutamate = N-acetyl-L-glutamate + L-ornithine. It catalyses the reaction L-glutamate + acetyl-CoA = N-acetyl-L-glutamate + CoA + H(+). Its pathway is amino-acid biosynthesis; L-arginine biosynthesis; L-ornithine and N-acetyl-L-glutamate from L-glutamate and N(2)-acetyl-L-ornithine (cyclic): step 1/1. The protein operates within amino-acid biosynthesis; L-arginine biosynthesis; N(2)-acetyl-L-ornithine from L-glutamate: step 1/4. Functionally, catalyzes two activities which are involved in the cyclic version of arginine biosynthesis: the synthesis of acetylglutamate from glutamate and acetyl-CoA, and of ornithine by transacetylation between acetylornithine and glutamate. This Aspergillus clavatus (strain ATCC 1007 / CBS 513.65 / DSM 816 / NCTC 3887 / NRRL 1 / QM 1276 / 107) protein is Arginine biosynthesis bifunctional protein ArgJ, mitochondrial.